Reading from the N-terminus, the 639-residue chain is Threonine--tRNA ligase (639 aa).

The TGS domain occupies 1 to 61; that stretch reads MINITLKDGK…KEDSELEILT (61 aa). The tract at residues 242–532 is catalytic; it reads DHRKLGKELD…LIEHFAGAFP (291 aa). The Zn(2+) site is built by Cys-333, His-384, and His-509.

It belongs to the class-II aminoacyl-tRNA synthetase family. As to quaternary structure, homodimer. Zn(2+) is required as a cofactor.

The protein resides in the cytoplasm. It catalyses the reaction tRNA(Thr) + L-threonine + ATP = L-threonyl-tRNA(Thr) + AMP + diphosphate + H(+). Its function is as follows. Catalyzes the attachment of threonine to tRNA(Thr) in a two-step reaction: L-threonine is first activated by ATP to form Thr-AMP and then transferred to the acceptor end of tRNA(Thr). Also edits incorrectly charged L-seryl-tRNA(Thr). The sequence is that of Threonine--tRNA ligase from Clostridium tetani (strain Massachusetts / E88).